Reading from the N-terminus, the 145-residue chain is Probable low molecular weight protein-tyrosine-phosphatase EpsP (145 aa).

C9 (nucleophile) is an active-site residue. Residue R15 is part of the active site. The active-site Proton donor is the D114.

The protein belongs to the low molecular weight phosphotyrosine protein phosphatase family.

It carries out the reaction O-phospho-L-tyrosyl-[protein] + H2O = L-tyrosyl-[protein] + phosphate. It participates in glycan metabolism; exopolysaccharide biosynthesis. May be involved in assembly or function of the EPS I polymerization/export complex and/or the EpsB ATPase. Alternatively it may function in the removal of the terminal phosphate from C55-isoprenyl pyrophosphate in order to recycle the C55-isoprenyl phosphate lipid carrier used in the synthesis of polysaccharide repeat units. This Ralstonia nicotianae (strain ATCC BAA-1114 / GMI1000) (Ralstonia solanacearum) protein is Probable low molecular weight protein-tyrosine-phosphatase EpsP (epsP).